The sequence spans 384 residues: tRNA-specific 2-thiouridylase MnmA (384 aa).

ATP-binding positions include A29–S36 and L55. Residue C123 is the Nucleophile of the active site. C123 and C220 are disulfide-bonded. G147 lines the ATP pocket. The interaction with tRNA stretch occupies residues R169–Q171. C220 functions as the Cysteine persulfide intermediate in the catalytic mechanism.

Belongs to the MnmA/TRMU family.

The protein resides in the cytoplasm. It carries out the reaction S-sulfanyl-L-cysteinyl-[protein] + uridine(34) in tRNA + AH2 + ATP = 2-thiouridine(34) in tRNA + L-cysteinyl-[protein] + A + AMP + diphosphate + H(+). In terms of biological role, catalyzes the 2-thiolation of uridine at the wobble position (U34) of tRNA, leading to the formation of s(2)U34. In Dinoroseobacter shibae (strain DSM 16493 / NCIMB 14021 / DFL 12), this protein is tRNA-specific 2-thiouridylase MnmA.